Here is a 134-residue protein sequence, read N- to C-terminus: Ion transport peptide-like (134 aa).

Disulfide bonds link cysteine 62-cysteine 98, cysteine 78-cysteine 94, and cysteine 81-cysteine 107.

Belongs to the arthropod CHH/MIH/GIH/VIH hormone family.

Its subcellular location is the secreted. This is Ion transport peptide-like from Schistocerca gregaria (Desert locust).